A 513-amino-acid polypeptide reads, in one-letter code: Activin receptor type-2B (513 aa).

A signal peptide spans 1–18 (MTAPWAALALLWGSLCAG). Residues 19 to 137 (SGRGEAETRE…PPPTAPTLLT (119 aa)) are Extracellular-facing. Intrachain disulfides connect Cys29-Cys59, Cys49-Cys77, Cys84-Cys103, Cys90-Cys102, and Cys104-Cys109. Residues Asn42 and Asn65 are each glycosylated (N-linked (GlcNAc...) asparagine). A helical transmembrane segment spans residues 138 to 158 (VLAYSLLPIGGLSLIVLLAFW). Residues 159 to 513 (MYRHRKPPYG…VDLLPKESSI (355 aa)) are Cytoplasmic-facing. The region spanning 190–481 (LQLLEIKARG…AGCVEERVSL (292 aa)) is the Protein kinase domain. ATP-binding positions include 196-204 (KARGRFGCV) and Lys217. The active-site Proton acceptor is Asp322. The tract at residues 492 to 513 (DCLVSLVTSVTNVDLLPKESSI) is interaction with DYNLT1.

The protein belongs to the protein kinase superfamily. TKL Ser/Thr protein kinase family. TGFB receptor subfamily. In terms of assembly, forms an activin receptor complex with activin type II receptors such as ACVR1B. Interacts with VPS39. Interacts with DYNLT1. Interacts with BMP3. Interacts with BMP2. The cofactor is Mg(2+). Mn(2+) is required as a cofactor. Post-translationally, phosphorylated. Constitutive phosphorylation is in part catalyzed by its own kinase activity.

It is found in the cell membrane. The catalysed reaction is L-threonyl-[receptor-protein] + ATP = O-phospho-L-threonyl-[receptor-protein] + ADP + H(+). The enzyme catalyses L-seryl-[receptor-protein] + ATP = O-phospho-L-seryl-[receptor-protein] + ADP + H(+). Its function is as follows. Transmembrane serine/threonine kinase activin type-2 receptor forming an activin receptor complex with activin type-1 serine/threonine kinase receptors (ACVR1, ACVR1B or ACVR1c). Transduces the activin signal from the cell surface to the cytoplasm and is thus regulating many physiological and pathological processes including neuronal differentiation and neuronal survival, hair follicle development and cycling, FSH production by the pituitary gland, wound healing, extracellular matrix production, immunosuppression and carcinogenesis. Activin is also thought to have a paracrine or autocrine role in follicular development in the ovary. Within the receptor complex, the type-2 receptors act as a primary activin receptors (binds activin-A/INHBA, activin-B/INHBB as well as inhibin-A/INHA-INHBA). The type-1 receptors like ACVR1B act as downstream transducers of activin signals. Activin binds to type-2 receptor at the plasma membrane and activates its serine-threonine kinase. The activated receptor type-2 then phosphorylates and activates the type-1 receptor. Once activated, the type-1 receptor binds and phosphorylates the SMAD proteins SMAD2 and SMAD3, on serine residues of the C-terminal tail. Soon after their association with the activin receptor and subsequent phosphorylation, SMAD2 and SMAD3 are released into the cytoplasm where they interact with the common partner SMAD4. This SMAD complex translocates into the nucleus where it mediates activin-induced transcription. Inhibitory SMAD7, which is recruited to ACVR1B through FKBP1A, can prevent the association of SMAD2 and SMAD3 with the activin receptor complex, thereby blocking the activin signal. Activin signal transduction is also antagonized by the binding to the receptor of inhibin-B via the IGSF1 inhibin coreceptor. The sequence is that of Activin receptor type-2B (Acvr2b) from Rattus norvegicus (Rat).